Consider the following 65-residue polypeptide: Large ribosomal subunit protein bL33m (65 aa).

It belongs to the bacterial ribosomal protein bL33 family. Component of the mitochondrial ribosome large subunit (39S) which comprises a 16S rRNA and about 50 distinct proteins.

It localises to the mitochondrion. The chain is Large ribosomal subunit protein bL33m (mRpL33) from Anopheles gambiae (African malaria mosquito).